A 204-amino-acid polypeptide reads, in one-letter code: Ribosomal RNA small subunit methyltransferase J (204 aa).

Residues 55-56 (RD), 71-72 (ER), and Asp-123 each bind S-adenosyl-L-methionine.

It belongs to the methyltransferase superfamily. RsmJ family.

It localises to the cytoplasm. It catalyses the reaction guanosine(1516) in 16S rRNA + S-adenosyl-L-methionine = N(2)-methylguanosine(1516) in 16S rRNA + S-adenosyl-L-homocysteine + H(+). In terms of biological role, specifically methylates the guanosine in position 1516 of 16S rRNA. This Rhodopseudomonas palustris (strain ATCC BAA-98 / CGA009) protein is Ribosomal RNA small subunit methyltransferase J.